The sequence spans 218 residues: Hypoxanthine-guanine phosphoribosyltransferase (218 aa).

Lysine 69 contributes to the GMP binding site. The residue at position 103 (lysine 103) is an N6-acetyllysine. Residue lysine 115 forms a Glycyl lysine isopeptide (Lys-Gly) (interchain with G-Cter in SUMO1); alternate linkage. Residue lysine 115 forms a Glycyl lysine isopeptide (Lys-Gly) (interchain with G-Cter in SUMO2); alternate linkage. Residues 134 to 142, lysine 166, 186 to 188, and aspartate 194 each bind GMP; these read EDIIDTGKT and KFV. The Proton acceptor role is filled by aspartate 138. A Phosphothreonine modification is found at threonine 142. Aspartate 194 lines the Mg(2+) pocket.

This sequence belongs to the purine/pyrimidine phosphoribosyltransferase family. Homotetramer. Mg(2+) serves as cofactor.

It is found in the cytoplasm. The enzyme catalyses IMP + diphosphate = hypoxanthine + 5-phospho-alpha-D-ribose 1-diphosphate. It carries out the reaction GMP + diphosphate = guanine + 5-phospho-alpha-D-ribose 1-diphosphate. It participates in purine metabolism; IMP biosynthesis via salvage pathway; IMP from hypoxanthine: step 1/1. In terms of biological role, converts guanine to guanosine monophosphate, and hypoxanthine to inosine monophosphate. Transfers the 5-phosphoribosyl group from 5-phosphoribosylpyrophosphate onto the purine. Plays a central role in the generation of purine nucleotides through the purine salvage pathway. This is Hypoxanthine-guanine phosphoribosyltransferase (Hprt1) from Mus musculus (Mouse).